Reading from the N-terminus, the 137-residue chain is Small ribosomal subunit protein bS16 (137 aa).

2 stretches are compositionally biased toward basic and acidic residues: residues 80–99 and 111–125; these read KSPE…KRLQ and VATE…KEAP. Positions 80 to 137 are disordered; it reads KSPEEAQKGGMRKGEFKRLQAEQAAKAQKKAVATEEPKAEEAKEAPPAESQAAEGKEE. Positions 126–137 are enriched in low complexity; that stretch reads PAESQAAEGKEE.

This sequence belongs to the bacterial ribosomal protein bS16 family.

The protein is Small ribosomal subunit protein bS16 of Coxiella burnetii (strain Dugway 5J108-111).